The primary structure comprises 351 residues: L-threonine 3-dehydrogenase (351 aa).

Residue Cys-39 participates in Zn(2+) binding. Catalysis depends on charge relay system residues Thr-41 and His-44. The Zn(2+) site is built by His-64, Glu-65, Cys-94, Cys-97, Cys-100, and Cys-108. Residues Ile-176, Asp-196, Arg-201, 271–273 (LGI), and 295–296 (IY) each bind NAD(+).

It belongs to the zinc-containing alcohol dehydrogenase family. Homotetramer. It depends on Zn(2+) as a cofactor.

It is found in the cytoplasm. It carries out the reaction L-threonine + NAD(+) = (2S)-2-amino-3-oxobutanoate + NADH + H(+). It functions in the pathway amino-acid degradation; L-threonine degradation via oxydo-reductase pathway; glycine from L-threonine: step 1/2. In terms of biological role, catalyzes the NAD(+)-dependent oxidation of L-threonine to 2-amino-3-ketobutyrate. The polypeptide is L-threonine 3-dehydrogenase (Francisella tularensis subsp. mediasiatica (strain FSC147)).